The chain runs to 782 residues: Cadherin-5 (782 aa).

The signal sequence occupies residues 1–22 (MQVLVMLLAAAGTYLGLLTAPT). Residues 23-44 (AASNPGRQDTPSTLPLHRRQKR) constitute a propeptide that is removed on maturation. Cadherin domains lie at 45 to 148 (DWIW…WPVF), 149 to 255 (TQLV…FPVF), 256 to 370 (TQTR…PPNF), 371 to 475 (KQPF…DNAP), and 476 to 592 (EFAK…MGAQ). Residues 45 to 598 (DWIWNQMHID…MGAQVGVSIQ (554 aa)) lie on the Extracellular side of the membrane. Residues Glu55 and Glu56 each coordinate Ca(2+). A glycan (N-linked (GlcNAc...) asparagine) is linked at Asn58. Positions 106, 108, 140, 141, 142, 143, and 144 each coordinate Ca(2+). Residue Asn154 is glycosylated (N-linked (GlcNAc...) asparagine). Positions 174, 176, 183, and 228 each coordinate Ca(2+). Residues Asn360, Asn440, Asn522, and Asn534 are each glycosylated (N-linked (GlcNAc...) asparagine). A helical transmembrane segment spans residues 599-619 (ALVAIFLCILTIAVISLLVYL). The required for interaction with PALS1 stretch occupies residues 620–659 (RRRLRKQARAHGKSVPEIHEQLVTYDEEGGGEMDTTSYDV). Over 620–782 (RRRLRKQARA…GSDPREELLY (163 aa)) the chain is Cytoplasmic.

In terms of assembly, part of a complex composed of AMOTL2, MAGI1 and CDH5, within the complex AMOTL2 acts as a scaffold protein for the interaction of MAGI1 with CDH5. The complex is required for coupling actin fibers to cell junctions in endothelial cells. Within the complex AMOTL2 (via its N-terminus) interacts with CDH5. Interacts (via cadherin 5 domain) with PTPRB. Interacts with TRPC4. Interacts with KRIT1. Interacts with PARD3. Interacts with RTN4 (isoform B). Interacts with PALS1; the interaction promotes PALS1 localization to cell junctions and is required for CDH5-mediated vascular lumen formation and endothelial cell. Interacts with CTNND1/p120-catenin; the interaction controls CADH5 endocytosis. Post-translationally, phosphorylated on tyrosine residues by KDR/VEGFR-2. Dephosphorylated by PTPRB. In terms of processing, O-glycosylated.

The protein localises to the cell junction. Its subcellular location is the adherens junction. The protein resides in the cell membrane. It localises to the cytoplasm. In terms of biological role, cadherins are calcium-dependent cell adhesion proteins. They preferentially interact with themselves in a homophilic manner in connecting cells; cadherins may thus contribute to the sorting of heterogeneous cell types. This cadherin may play a important role in endothelial cell biology through control of the cohesion and organization of the intercellular junctions. It associates with alpha-catenin forming a link to the cytoskeleton. Plays a role in coupling actin fibers to cell junctions in endothelial cells, via acting as a cell junctional complex anchor for AMOTL2 and MAGI1. Acts in concert with KRIT1 and PALS1 to establish and maintain correct endothelial cell polarity and vascular lumen. These effects are mediated by recruitment and activation of the Par polarity complex and RAP1B. Required for activation of PRKCZ and for localization of phosphorylated PRKCZ, PARD3, TIAM1 and RAP1B to the cell junction. Associates with CTNND1/p120-catenin to control CADH5 endocytosis. In Sus scrofa (Pig), this protein is Cadherin-5.